The following is a 453-amino-acid chain: Putative dipeptidase UREG_03382 (453 aa).

Residues 1–33 (MSTRDHVKQSPMPVQEGYPRSSKEFSPPSSRSR) are disordered. A helical transmembrane segment spans residues 41 to 63 (LTMSLLIAAGAATFSKYIFPLGS). His-95, Asp-97, and Glu-208 together coordinate Zn(2+). A disulfide bridge connects residues Cys-147 and Cys-223. His-221 is a binding site for substrate. Positions 265 and 286 each coordinate Zn(2+). The substrate site is built by Arg-297 and Asp-357. Residues Asn-370 and Asn-443 are each glycosylated (N-linked (GlcNAc...) asparagine).

It belongs to the metallo-dependent hydrolases superfamily. Peptidase M19 family. Zn(2+) serves as cofactor.

The protein localises to the membrane. The catalysed reaction is an L-aminoacyl-L-amino acid + H2O = 2 an L-alpha-amino acid. Functionally, hydrolyzes a wide range of dipeptides. In Uncinocarpus reesii (strain UAMH 1704), this protein is Putative dipeptidase UREG_03382.